The sequence spans 715 residues: Fatty acid oxidation complex subunit alpha (715 aa).

The segment at 1–190 is enoyl-CoA hydratase; the sequence is MTTTSAFMLN…KAGLVDDVVP (190 aa). Residues 306–714 form a 3-hydroxyacyl-CoA dehydrogenase region; the sequence is GPLNSVGILG…FWTNGETDQG (409 aa).

In the N-terminal section; belongs to the enoyl-CoA hydratase/isomerase family. It in the central section; belongs to the 3-hydroxyacyl-CoA dehydrogenase family. In terms of assembly, heterotetramer of two alpha chains (FadJ) and two beta chains (FadI).

The protein localises to the cytoplasm. The catalysed reaction is a (3S)-3-hydroxyacyl-CoA = a (2E)-enoyl-CoA + H2O. The enzyme catalyses a 4-saturated-(3S)-3-hydroxyacyl-CoA = a (3E)-enoyl-CoA + H2O. It catalyses the reaction a (3S)-3-hydroxyacyl-CoA + NAD(+) = a 3-oxoacyl-CoA + NADH + H(+). It carries out the reaction (3S)-3-hydroxybutanoyl-CoA = (3R)-3-hydroxybutanoyl-CoA. It participates in lipid metabolism; fatty acid beta-oxidation. In terms of biological role, catalyzes the formation of a hydroxyacyl-CoA by addition of water on enoyl-CoA. Also exhibits 3-hydroxyacyl-CoA epimerase and 3-hydroxyacyl-CoA dehydrogenase activities. In Salmonella choleraesuis (strain SC-B67), this protein is Fatty acid oxidation complex subunit alpha.